Reading from the N-terminus, the 627-residue chain is Pescadillo homolog (627 aa).

A BRCT domain is found at 321–414 (RLRTLFKGLK…QLLPTNKYFI (94 aa)). 3 disordered regions span residues 450 to 469 (HVQSDDDSEDEAQEEEETVD), 488 to 562 (YKKF…LQAR), and 595 to 627 (TIEASEKEARKTAKREARKEAAAAAAKASKLGK). A phosphoserine mark is found at serine 453 and serine 457. 2 stretches are compositionally biased toward acidic residues: residues 454-469 (DDDSEDEAQEEEETVD) and 497-521 (VNEDEEDPEDDDDNEDDDEEEEELD). Residues 507–538 (DDDNEDDDEEEEELDEKTKRLQEEKQKMSVQS) adopt a coiled-coil conformation. The span at 522–533 (EKTKRLQEEKQK) shows a compositional bias: basic and acidic residues. A compositionally biased stretch (basic residues) spans 540 to 549 (KVHKVNKRQV). Composition is skewed to basic and acidic residues over residues 550-559 (HKAEVDEHRL) and 595-615 (TIEASEKEARKTAKREARKEA). A coiled-coil region spans residues 582–625 (KEKEEWLLRKKRRTIEASEKEARKTAKREARKEAAAAAAKASKL). Low complexity predominate over residues 616–627 (AAAAAKASKLGK).

Belongs to the pescadillo family.

It localises to the nucleus. It is found in the nucleolus. Its subcellular location is the nucleoplasm. Functionally, required for maturation of ribosomal RNAs and formation of the large ribosomal subunit. The sequence is that of Pescadillo homolog from Drosophila sechellia (Fruit fly).